Here is a 418-residue protein sequence, read N- to C-terminus: Perilipin-1 homolog (418 aa).

The required for lipid droplet localization stretch occupies residues 211–275 (LTIGQRVKNL…EKKTWVIEKS (65 aa)).

Belongs to the perilipin family. As to expression, expressed in intestinal and epidermal cells. Expressed in the muscle and hypodermis.

It localises to the lipid droplet. In terms of biological role, lipid droplet-associated protein which plays a role in lipid droplet clustering. This is Perilipin-1 homolog from Caenorhabditis elegans.